A 66-amino-acid polypeptide reads, in one-letter code: Large ribosomal subunit protein bL35 (66 aa).

The span at 1–16 (MPKQKTHRASAKRFKR) shows a compositional bias: basic residues. Residues 1 to 20 (MPKQKTHRASAKRFKRTGNG) are disordered.

This sequence belongs to the bacterial ribosomal protein bL35 family.

In Lactococcus lactis subsp. lactis (strain IL1403) (Streptococcus lactis), this protein is Large ribosomal subunit protein bL35.